The chain runs to 684 residues: Phenoloxidase 1 (684 aa).

The propeptide at 1-50 (MSDKNKLLLLFDRPLETVIVPRGPDQEAFDVPVDLLSDRYKAIGVQVSNR) is removed by PPAF1. N80 carries N-linked (GlcNAc...) asparagine glycosylation. 3 residues coordinate Cu cation: H208, H212, and H237. E349 (proton acceptor) is an active-site residue. N-linked (GlcNAc...) asparagine glycosylation is found at N352 and N356. H364, H368, and H404 together coordinate Cu cation. Residues N486, N491, and N545 are each glycosylated (N-linked (GlcNAc...) asparagine). 2 disulfides stabilise this stretch: C579/C621 and C581/C628.

This sequence belongs to the tyrosinase family. As to quaternary structure, dimer. Might form a homodimer or a heterodimer with PPO1. Might interact with PPAF2 (via CLIP domain); the interaction might be required for PPO1 activity. Cu(2+) is required as a cofactor. Post-translationally, propeptide cleaved by PPAF1. In terms of tissue distribution, hemocytes.

It localises to the secreted. Functionally, this is a copper-containing oxidase that functions in the formation of pigments such as melanins and other polyphenolic compounds. Catalyzes the oxidation of o-diphenols (N-acetyldopamine, 4-methylcatechol and dopamine). Cannot oxidize monophenols and p-phenols (L-tyrosine, tyramine, gentisic acid and hydroquinone). Binds to the surface of hemocytes and is involved in hemocyte melanization. Activation of the enzyme in response to bacterial lipopolysaccharides (LPS) suggests it may play a role in innate immunity. The protein is Phenoloxidase 1 of Holotrichia diomphalia (Korean black chafer).